Reading from the N-terminus, the 381-residue chain is Succinyl-diaminopimelate desuccinylase 1 (381 aa).

Histidine 70 lines the Zn(2+) pocket. Residue aspartate 72 is part of the active site. Aspartate 103 is a binding site for Zn(2+). Residue glutamate 136 is the Proton acceptor of the active site. Zn(2+) is bound by residues glutamate 137, glutamate 165, and histidine 354.

It belongs to the peptidase M20A family. DapE subfamily. Homodimer. Zn(2+) serves as cofactor. It depends on Co(2+) as a cofactor.

It carries out the reaction N-succinyl-(2S,6S)-2,6-diaminopimelate + H2O = (2S,6S)-2,6-diaminopimelate + succinate. The protein operates within amino-acid biosynthesis; L-lysine biosynthesis via DAP pathway; LL-2,6-diaminopimelate from (S)-tetrahydrodipicolinate (succinylase route): step 3/3. Catalyzes the hydrolysis of N-succinyl-L,L-diaminopimelic acid (SDAP), forming succinate and LL-2,6-diaminopimelate (DAP), an intermediate involved in the bacterial biosynthesis of lysine and meso-diaminopimelic acid, an essential component of bacterial cell walls. The polypeptide is Succinyl-diaminopimelate desuccinylase 1 (Ruegeria sp. (strain TM1040) (Silicibacter sp.)).